We begin with the raw amino-acid sequence, 1225 residues long: DNA-directed RNA polymerase subunit beta' (1225 aa).

The Zn(2+) site is built by Cys-60, Cys-62, Cys-75, and Cys-78. Positions 450, 452, and 454 each coordinate Mg(2+). Zn(2+) contacts are provided by Cys-818, Cys-892, Cys-899, and Cys-902.

It belongs to the RNA polymerase beta' chain family. As to quaternary structure, the RNAP catalytic core consists of 2 alpha, 1 beta, 1 beta' and 1 omega subunit. When a sigma factor is associated with the core the holoenzyme is formed, which can initiate transcription. The cofactor is Mg(2+). It depends on Zn(2+) as a cofactor.

It carries out the reaction RNA(n) + a ribonucleoside 5'-triphosphate = RNA(n+1) + diphosphate. In terms of biological role, DNA-dependent RNA polymerase catalyzes the transcription of DNA into RNA using the four ribonucleoside triphosphates as substrates. In Streptococcus pneumoniae (strain ATCC 700669 / Spain 23F-1), this protein is DNA-directed RNA polymerase subunit beta'.